The following is a 375-amino-acid chain: Carbamoyl phosphate synthase small chain (375 aa).

The tract at residues 1–180 (MSKALLVLED…DAYVVEPKGK (180 aa)) is CPSase. Serine 46, glycine 232, and glycine 234 together coordinate L-glutamine. A Glutamine amidotransferase type-1 domain is found at 184-375 (TVAALDLGIK…SFVELMAAQR (192 aa)). The active-site Nucleophile is cysteine 260. Positions 261, 264, 302, 304, and 305 each coordinate L-glutamine. Active-site residues include histidine 350 and glutamate 352.

This sequence belongs to the CarA family. Composed of two chains; the small (or glutamine) chain promotes the hydrolysis of glutamine to ammonia, which is used by the large (or ammonia) chain to synthesize carbamoyl phosphate. Tetramer of heterodimers (alpha,beta)4.

The catalysed reaction is hydrogencarbonate + L-glutamine + 2 ATP + H2O = carbamoyl phosphate + L-glutamate + 2 ADP + phosphate + 2 H(+). It carries out the reaction L-glutamine + H2O = L-glutamate + NH4(+). Its pathway is amino-acid biosynthesis; L-arginine biosynthesis; carbamoyl phosphate from bicarbonate: step 1/1. The protein operates within pyrimidine metabolism; UMP biosynthesis via de novo pathway; (S)-dihydroorotate from bicarbonate: step 1/3. Functionally, small subunit of the glutamine-dependent carbamoyl phosphate synthetase (CPSase). CPSase catalyzes the formation of carbamoyl phosphate from the ammonia moiety of glutamine, carbonate, and phosphate donated by ATP, constituting the first step of 2 biosynthetic pathways, one leading to arginine and/or urea and the other to pyrimidine nucleotides. The small subunit (glutamine amidotransferase) binds and cleaves glutamine to supply the large subunit with the substrate ammonia. The chain is Carbamoyl phosphate synthase small chain from Mycobacterium leprae (strain TN).